Reading from the N-terminus, the 212-residue chain is Eggshell protein 1 (212 aa).

The signal sequence occupies residues 1-27 (MKSSLTLLFLAAIGYTIAYPPPSDYDS). A disordered region spans residues 155–212 (RKNGHGKGGKGGNGGGGGKGGGKGGGNGKGNGKGGGGKNGGGKGGNGGKGGSYAPSYY). The segment covering 163-205 (GKGGNGGGGGKGGGKGGGNGKGNGKGGGGKNGGGKGGNGGKGG) has biased composition (gly residues).

Detected only in mature female parasites.

The chain is Eggshell protein 1 (ESG-1) from Schistosoma japonicum (Blood fluke).